We begin with the raw amino-acid sequence, 636 residues long: Nuclear receptor subfamily 2 group C member 1 (636 aa).

A DNA-binding region (nuclear receptor) is located at residues 149–224; it reads VELCVVCGDK…LGMKQDSVQC (76 aa). 2 NR C4-type zinc fingers span residues 152 to 172 and 188 to 207; these read CVVCGDKASGRHYGAVTCEGC and CRGSKDCVINKHYRNRCQYC. Residues 382 to 623 enclose the NR LBD domain; the sequence is ECVGSNSNLT…SIIPYILRME (242 aa).

This sequence belongs to the nuclear hormone receptor family. NR2 subfamily.

The protein localises to the nucleus. Orphan nuclear receptor. Binds the IR7 element in the promoter of its own gene in an autoregulatory negative feedback mechanism. Primarily repressor of a broad range of genes. Binds to hormone response elements (HREs) consisting of two 5'-AGGTCA-3' half site direct repeat consensus sequences. This chain is Nuclear receptor subfamily 2 group C member 1, found in Xenopus tropicalis (Western clawed frog).